The chain runs to 203 residues: MNRVEPPYDVKEALVFTQKMAQLSKALWKSIEKDWQQWLKPYDLNINEHHILWIAYQLNGASISEIAKFGVMHVSTAFNFSKKLEERGYLRFSKRLNDKRNTYVQLTEEGTEVFWSLLEEFDPTRNAVFKGSQPLYHLFGKFPEVAEMMCMIRHIYGDDFMEIFETSLTNIDNDFESVNGKLKKKAKDSAADEPAEELEPVNS.

The region spanning 13-157 (ALVFTQKMAQ…MMCMIRHIYG (145 aa)) is the HTH marR-type domain. Positions 63-86 (ISEIAKFGVMHVSTAFNFSKKLEE) form a DNA-binding region, H-T-H motif. The interval 183–203 (KKKAKDSAADEPAEELEPVNS) is disordered. Residues 191-203 (ADEPAEELEPVNS) show a composition bias toward acidic residues.

Homodimer. Interacts with SinR.

Negative regulator of protease production and sporulation. Acts by binding directly to the promoter of protease genes (aprE and nprE), and by repressing oligopeptide permease operons (appABCDF and oppABCDF), thereby preventing uptake of oligopeptides required for initiation of sporulation. Acts with SinR as a corepressor of epr expression. Binds to non-m6A-5-methylated 5'-GACGAG-3' sites, tested with scpA; when the target is methylated by DnmA, this repressor no longer binds and transcription is up-regulated. The polypeptide is DNA-binding transcriptional repressor ScoC (Bacillus subtilis (strain 168)).